The following is a 245-amino-acid chain: 14-3-3 protein zeta (245 aa).

It belongs to the 14-3-3 family. In terms of assembly, homodimer. Present in all adult tissues examined with the highest levels in the brain.

The protein resides in the cytoplasm. Its function is as follows. Adapter protein implicated in the regulation of a large spectrum of both general and specialized signaling pathways. Binds to a large number of partners, usually by recognition of a phosphoserine or phosphothreonine motif. Binding generally results in the modulation of the activity of the binding partner. This Xenopus laevis (African clawed frog) protein is 14-3-3 protein zeta (ywhaz).